The chain runs to 75 residues: Ribonuclease pancreatic (75 aa).

Intrachain disulfides connect Cys-7-Cys-65 and Cys-46-Cys-53. A glycan (N-linked (GlcNAc...) asparagine) is linked at Asn-15. Substrate is bound by residues 22–26 (KPVNT), Lys-47, and Arg-66.

This sequence belongs to the pancreatic ribonuclease family. As to quaternary structure, monomer. Interacts with and forms tight 1:1 complexes with RNH1. Dimerization of two such complexes may occur. Interaction with RNH1 inhibits this protein. Pancreas.

It is found in the secreted. It catalyses the reaction an [RNA] containing cytidine + H2O = an [RNA]-3'-cytidine-3'-phosphate + a 5'-hydroxy-ribonucleotide-3'-[RNA].. The enzyme catalyses an [RNA] containing uridine + H2O = an [RNA]-3'-uridine-3'-phosphate + a 5'-hydroxy-ribonucleotide-3'-[RNA].. In terms of biological role, endonuclease that catalyzes the cleavage of RNA on the 3' side of pyrimidine nucleotides. Acts on single-stranded and double-stranded RNA. In Oryx leucoryx (Arabian oryx), this protein is Ribonuclease pancreatic (rnase1).